Reading from the N-terminus, the 78-residue chain is Acyl carrier protein (78 aa).

The Carrier domain maps to serine 2–alanine 77. Residue serine 37 is modified to O-(pantetheine 4'-phosphoryl)serine.

Belongs to the acyl carrier protein (ACP) family. Post-translationally, 4'-phosphopantetheine is transferred from CoA to a specific serine of apo-ACP by AcpS. This modification is essential for activity because fatty acids are bound in thioester linkage to the sulfhydryl of the prosthetic group.

It is found in the cytoplasm. The protein operates within lipid metabolism; fatty acid biosynthesis. Carrier of the growing fatty acid chain in fatty acid biosynthesis. This chain is Acyl carrier protein, found in Phocaeicola vulgatus (strain ATCC 8482 / DSM 1447 / JCM 5826 / CCUG 4940 / NBRC 14291 / NCTC 11154) (Bacteroides vulgatus).